Reading from the N-terminus, the 377-residue chain is Meiotic driver cw9 (377 aa).

Disordered regions lie at residues 1–49 (MKNK…DLNN) and 64–100 (NKSTTPPDYDENRLPITDEGNNPPNTHRENHSSGTTD). The span at 11-29 (SMDEMSAKNDNEIDLEKGP) shows a compositional bias: basic and acidic residues. The next 7 helical transmembrane spans lie at 105-125 (FLIKLLISFTSIILFNAPAVC), 142-162 (WTLFGFWCLVCTLALLFLTYF), 172-192 (VTIIFLAQCIKVTAVFLAQCV), 218-238 (VVIIWLLWVVICYTLFLRSKF), 252-272 (CSISAALLLFLLYVRLPFWTL), 276-296 (FSGLFQVLGVQSCVVIVTKGL), and 306-326 (ATGYEIEVSSLFVIGNFLFFY).

The protein belongs to the WTF family. Homomer. Forms protein aggregates. The two isoforms can interact with each other and with themselves. High sequence similarity is required for their interaction.

The protein resides in the spore membrane. It localises to the vacuole membrane. It is found in the ascus epiplasm. The protein localises to the cytoplasm. Its subcellular location is the endoplasmic reticulum membrane. In terms of biological role, promotes unequal transmission of alleles from the parental zygote to progeny spores by acting as poison/antidote system where the poison and antidote proteins are produced from the same locus; the poison component is trans-acting and targets all spores within an ascus whereas the antidote component is spore-specific, leading to poisoning of all progeny that do not inherit the allele. Functionally, localizes isoform 2 to the vacuole thereby facilitating its degradation. Its function is as follows. Forms toxic aggregates that disrupt spore maturation. The sequence is that of Meiotic driver cw9 from Schizosaccharomyces pombe (Fission yeast).